The chain runs to 220 residues: tRNA (guanine-N(7)-)-methyltransferase (220 aa).

4 residues coordinate S-adenosyl-L-methionine: E44, E69, N96, and D118. Residue D118 is part of the active site. Residue K122 coordinates substrate. The tract at residues 124 to 129 (RHEKRR) is interaction with RNA. Substrate-binding positions include D154 and 191 to 194 (TEYE).

It belongs to the class I-like SAM-binding methyltransferase superfamily. TrmB family.

The catalysed reaction is guanosine(46) in tRNA + S-adenosyl-L-methionine = N(7)-methylguanosine(46) in tRNA + S-adenosyl-L-homocysteine. It participates in tRNA modification; N(7)-methylguanine-tRNA biosynthesis. In terms of biological role, catalyzes the formation of N(7)-methylguanine at position 46 (m7G46) in tRNA. In Geobacillus sp. (strain WCH70), this protein is tRNA (guanine-N(7)-)-methyltransferase.